Here is a 71-residue protein sequence, read N- to C-terminus: Gas vesicle protein A (71 aa).

Residues 12-22 (LAEVIDRILDK) form an alpha helix 1 region. Residues 26–34 (VDAWVRVSL) are beta-strand 1. The tract at residues 35 to 37 (VGI) is beta turn. Residues 38–46 (ELLAIEARI) form a beta-strand 2 region. Residues 51–70 (VETYLKYAEAVGLTQSAAVP) are alpha helix 2.

This sequence belongs to the gas vesicle GvpA family. In terms of assembly, the gas vesicle shell is 2 nm thick and consists of a single layer of this protein. It forms helical ribs nearly perpendicular to the long axis of the vesicle.

It localises to the gas vesicle shell. In terms of biological role, gas vesicles are hollow, gas filled proteinaceous nanostructures found in some microorganisms. During planktonic growth they allow positioning of the organism at a favorable depth for light or nutrient acquisition. GvpA forms the protein shell. The protein is Gas vesicle protein A of Microchaete diplosiphon (Fremyella diplosiphon).